A 144-amino-acid chain; its full sequence is MPTINQLVRKGREDKVVKSKSPALQKGYNSFKKSQTNQSSPQKRGVCTRVGTMTPKKPNSALRKYARVRLTNGIEVTAYIGGIGHNLQEHSVVLVRGGRVKDLPGVRYHIVRGALDTAGVNNRKQGRSKYGTKRPKPGQAAAKK.

Residues 1-55 are disordered; sequence MPTINQLVRKGREDKVVKSKSPALQKGYNSFKKSQTNQSSPQKRGVCTRVGTMTP. Over residues 27-42 the composition is skewed to polar residues; it reads GYNSFKKSQTNQSSPQ. Position 102 is a 3-methylthioaspartic acid (D102). The disordered stretch occupies residues 119-144; that stretch reads GVNNRKQGRSKYGTKRPKPGQAAAKK. Basic residues predominate over residues 124-144; the sequence is KQGRSKYGTKRPKPGQAAAKK.

The protein belongs to the universal ribosomal protein uS12 family. As to quaternary structure, part of the 30S ribosomal subunit. Contacts proteins S8 and S17. May interact with IF1 in the 30S initiation complex.

With S4 and S5 plays an important role in translational accuracy. In terms of biological role, interacts with and stabilizes bases of the 16S rRNA that are involved in tRNA selection in the A site and with the mRNA backbone. Located at the interface of the 30S and 50S subunits, it traverses the body of the 30S subunit contacting proteins on the other side and probably holding the rRNA structure together. The combined cluster of proteins S8, S12 and S17 appears to hold together the shoulder and platform of the 30S subunit. This Brevibacillus brevis (strain 47 / JCM 6285 / NBRC 100599) protein is Small ribosomal subunit protein uS12.